Consider the following 101-residue polypeptide: Small ribosomal subunit protein uS14 (101 aa).

Belongs to the universal ribosomal protein uS14 family. Part of the 30S ribosomal subunit. Contacts proteins S3 and S10.

Its function is as follows. Binds 16S rRNA, required for the assembly of 30S particles and may also be responsible for determining the conformation of the 16S rRNA at the A site. The chain is Small ribosomal subunit protein uS14 from Actinobacillus pleuropneumoniae serotype 5b (strain L20).